The primary structure comprises 57 residues: Large ribosomal subunit protein bL32B (57 aa).

It belongs to the bacterial ribosomal protein bL32 family.

The chain is Large ribosomal subunit protein bL32B (rpmF2) from Listeria innocua serovar 6a (strain ATCC BAA-680 / CLIP 11262).